Here is a 557-residue protein sequence, read N- to C-terminus: Phosphoribosylaminoimidazole carboxylase, chloroplastic (557 aa).

In terms of domain architecture, ATP-grasp spans 108–293 (KVALLPAWIP…QFEQHLPAVV (186 aa)). Residue 132–189 (WDSLDIHFMIKSRRLAYDGRGNFVAKSEEELSSAVDALGGFDRGLYAEKWAPFVKELA) participates in ATP binding. Residues 387 to 557 (CSTLLGFIMG…HGWESYLKNS (171 aa)) are AIR carboxylase catalytic subunit.

It in the C-terminal section; belongs to the AIR carboxylase family. Class I subfamily.

The protein resides in the plastid. It is found in the chloroplast. It catalyses the reaction 5-amino-1-(5-phospho-D-ribosyl)imidazole-4-carboxylate + H(+) = 5-amino-1-(5-phospho-beta-D-ribosyl)imidazole + CO2. It functions in the pathway purine metabolism; IMP biosynthesis via de novo pathway; 5-amino-1-(5-phospho-D-ribosyl)imidazole-4-carboxylate from 5-amino-1-(5-phospho-D-ribosyl)imidazole (carboxylase route): step 1/1. The polypeptide is Phosphoribosylaminoimidazole carboxylase, chloroplastic (PURKE) (Vigna aconitifolia (Moth bean)).